The sequence spans 211 residues: Uracil phosphoribosyltransferase (211 aa).

Residues Arg77, Arg102, and 129–137 (DPMLATGGS) each bind 5-phospho-alpha-D-ribose 1-diphosphate. Residues Ile192 and 197 to 199 (GDA) each bind uracil. Asp198 provides a ligand contact to 5-phospho-alpha-D-ribose 1-diphosphate.

The protein belongs to the UPRTase family. The cofactor is Mg(2+).

The catalysed reaction is UMP + diphosphate = 5-phospho-alpha-D-ribose 1-diphosphate + uracil. It functions in the pathway pyrimidine metabolism; UMP biosynthesis via salvage pathway; UMP from uracil: step 1/1. Allosterically activated by GTP. Catalyzes the conversion of uracil and 5-phospho-alpha-D-ribose 1-diphosphate (PRPP) to UMP and diphosphate. In Corynebacterium efficiens (strain DSM 44549 / YS-314 / AJ 12310 / JCM 11189 / NBRC 100395), this protein is Uracil phosphoribosyltransferase.